Reading from the N-terminus, the 60-residue chain is Putative transcriptional regulator XtpA (60 aa).

Its function is as follows. Controls the expression of small non-coding RNA GcvB, which represses the expression of many amino acid transporter proteins and uptake of aminoglycoside antibiotics in cells. Might be a transcriptional activator. An RNA (xtr) with a tRNA-like fold possibly derived from tRNA-Arg(UCG) is encoded entirely within the protein; xtr does not have the sequence corresponding to tRNA anticodon or variable arms. 10 synonymous codon changes in the xtr region of xtpA have the same phenotype as a deletion mutation, suggesting the mRNA secondary structure is important for function. This Escherichia coli (strain K12) protein is Putative transcriptional regulator XtpA.